The following is a 359-amino-acid chain: Chorismate synthase (359 aa).

Arginine 47 contacts NADP(+). FMN is bound by residues 123 to 125, glycine 283, 298 to 302, and arginine 326; these read RSS and KPTSS.

Belongs to the chorismate synthase family. Homotetramer. Requires FMNH2 as cofactor.

The enzyme catalyses 5-O-(1-carboxyvinyl)-3-phosphoshikimate = chorismate + phosphate. The protein operates within metabolic intermediate biosynthesis; chorismate biosynthesis; chorismate from D-erythrose 4-phosphate and phosphoenolpyruvate: step 7/7. Its function is as follows. Catalyzes the anti-1,4-elimination of the C-3 phosphate and the C-6 proR hydrogen from 5-enolpyruvylshikimate-3-phosphate (EPSP) to yield chorismate, which is the branch point compound that serves as the starting substrate for the three terminal pathways of aromatic amino acid biosynthesis. This reaction introduces a second double bond into the aromatic ring system. The polypeptide is Chorismate synthase (Chlamydia felis (strain Fe/C-56) (Chlamydophila felis)).